The chain runs to 165 residues: Xanthine-guanine phosphoribosyltransferase (165 aa).

Residues 41–42 and 98–106 each bind 5-phospho-alpha-D-ribose 1-diphosphate; these read RG and DDLTDTGKT. Asp99 is a binding site for Mg(2+). Positions 102 and 145 each coordinate guanine. 2 residues coordinate xanthine: Asp102 and Ile145. GMP-binding positions include 102–106 and 144–145; these read DTGKT and WI.

This sequence belongs to the purine/pyrimidine phosphoribosyltransferase family. XGPT subfamily. As to quaternary structure, homotetramer. Mg(2+) serves as cofactor.

It is found in the cell inner membrane. The enzyme catalyses GMP + diphosphate = guanine + 5-phospho-alpha-D-ribose 1-diphosphate. It catalyses the reaction XMP + diphosphate = xanthine + 5-phospho-alpha-D-ribose 1-diphosphate. The catalysed reaction is IMP + diphosphate = hypoxanthine + 5-phospho-alpha-D-ribose 1-diphosphate. Its pathway is purine metabolism; GMP biosynthesis via salvage pathway; GMP from guanine: step 1/1. The protein operates within purine metabolism; XMP biosynthesis via salvage pathway; XMP from xanthine: step 1/1. Its function is as follows. Purine salvage pathway enzyme that catalyzes the transfer of the ribosyl-5-phosphate group from 5-phospho-alpha-D-ribose 1-diphosphate (PRPP) to the N9 position of the 6-oxopurines guanine and xanthine to form the corresponding ribonucleotides GMP (guanosine 5'-monophosphate) and XMP (xanthosine 5'-monophosphate), with the release of PPi. To a lesser extent, also acts on hypoxanthine. This is Xanthine-guanine phosphoribosyltransferase from Sinorhizobium medicae (strain WSM419) (Ensifer medicae).